The chain runs to 266 residues: Putative carbamate hydrolase RutD (266 aa).

One can recognise an AB hydrolase-1 domain in the interval 14 to 115 (PVVVLISGLG…TVLISVNGWL (102 aa)).

It belongs to the AB hydrolase superfamily. Hydrolase RutD family.

The catalysed reaction is carbamate + 2 H(+) = NH4(+) + CO2. Involved in pyrimidine catabolism. May facilitate the hydrolysis of carbamate, a reaction that can also occur spontaneously. This chain is Putative carbamate hydrolase RutD, found in Shigella sonnei (strain Ss046).